A 480-amino-acid chain; its full sequence is Glutamate--tRNA ligase (480 aa).

The 'HIGH' region motif lies at P21 to G31. Positions 110, 112, 137, and 139 each coordinate Zn(2+). Positions K248 to R252 match the 'KMSKS' region motif. ATP is bound at residue K251.

The protein belongs to the class-I aminoacyl-tRNA synthetase family. Glutamate--tRNA ligase type 1 subfamily. In terms of assembly, monomer. It depends on Zn(2+) as a cofactor.

The protein localises to the cytoplasm. It catalyses the reaction tRNA(Glu) + L-glutamate + ATP = L-glutamyl-tRNA(Glu) + AMP + diphosphate. In terms of biological role, catalyzes the attachment of glutamate to tRNA(Glu) in a two-step reaction: glutamate is first activated by ATP to form Glu-AMP and then transferred to the acceptor end of tRNA(Glu). This Mannheimia succiniciproducens (strain KCTC 0769BP / MBEL55E) protein is Glutamate--tRNA ligase.